Consider the following 1217-residue polypeptide: ATP-dependent helicase/nuclease subunit A (1217 aa).

Residues 10–475 (VIWTDAQWQS…MDLSQNFRSR (466 aa)) enclose the UvrD-like helicase ATP-binding domain. 31 to 38 (AAAGSGKT) contributes to the ATP binding site. The region spanning 491 to 786 (DEQVGEVNYD…RMMTIHSSKG (296 aa)) is the UvrD-like helicase C-terminal domain.

It belongs to the helicase family. AddA subfamily. Heterodimer of AddA and AddB/RexB. Mg(2+) is required as a cofactor.

It carries out the reaction Couples ATP hydrolysis with the unwinding of duplex DNA by translocating in the 3'-5' direction.. The enzyme catalyses ATP + H2O = ADP + phosphate + H(+). The heterodimer acts as both an ATP-dependent DNA helicase and an ATP-dependent, dual-direction single-stranded exonuclease. Recognizes the chi site generating a DNA molecule suitable for the initiation of homologous recombination. The AddA nuclease domain is required for chi fragment generation; this subunit has the helicase and 3' -&gt; 5' nuclease activities. This Staphylococcus aureus (strain bovine RF122 / ET3-1) protein is ATP-dependent helicase/nuclease subunit A.